A 299-amino-acid chain; its full sequence is Probable lipid kinase YegS (299 aa).

In terms of domain architecture, DAGKc spans 2 to 133 (ANFPASLLIL…IDMARVNDKT (132 aa)). ATP-binding positions include Thr-40, 66-72 (GDGTINE), and Thr-95. Positions 215, 218, and 220 each coordinate Mg(2+). Glu-271 acts as the Proton acceptor in catalysis.

Belongs to the diacylglycerol/lipid kinase family. YegS lipid kinase subfamily. The cofactor is Mg(2+). Requires Ca(2+) as cofactor.

Its subcellular location is the cytoplasm. Probably phosphorylates lipids; the in vivo substrate is unknown. This Salmonella paratyphi A (strain ATCC 9150 / SARB42) protein is Probable lipid kinase YegS.